A 696-amino-acid chain; its full sequence is D-(-)-3-hydroxybutyrate oligomer hydrolase (696 aa).

A signal peptide spans 1–20 (MTRLGWGRRMVFGAALAAVA). The Charge relay system role is filled by serine 309.

The protein belongs to the D-(-)-3-hydroxybutyrate oligomer hydrolase family.

Its subcellular location is the secreted. It catalyses the reaction (3R)-hydroxybutanoate dimer + H2O = 2 (R)-3-hydroxybutanoate + H(+). The protein operates within lipid metabolism; butanoate metabolism. Participates in the degradation of poly-3-hydroxybutyrate (PHB). It works downstream of poly(3-hydroxybutyrate) depolymerase, hydrolyzing D(-)-3-hydroxybutyrate oligomers of various length (3HB-oligomers) into 3HB-monomers. This is D-(-)-3-hydroxybutyrate oligomer hydrolase from Burkholderia lata (strain ATCC 17760 / DSM 23089 / LMG 22485 / NCIMB 9086 / R18194 / 383).